A 356-amino-acid chain; its full sequence is Mitogen-activated protein kinase PMK11 (356 aa).

In terms of domain architecture, Protein kinase spans 24–312; it reads YDIQDVVGEG…VEEALKHPYL (289 aa). Residues 30-38 and Lys-53 each bind ATP; that span reads VGEGAYGVV.

The protein belongs to the protein kinase superfamily. CMGC Ser/Thr protein kinase family. MAP kinase subfamily. It depends on Mg(2+) as a cofactor. In terms of processing, phosphorylated by MST7.

It catalyses the reaction L-seryl-[protein] + ATP = O-phospho-L-seryl-[protein] + ADP + H(+). It carries out the reaction L-threonyl-[protein] + ATP = O-phospho-L-threonyl-[protein] + ADP + H(+). In terms of biological role, mitogen-activated protein kinase; part of the MST11-MST7-PMK1 MAP kinase (MAPK) cascade that is essential for appressorium formation, penetration and invasive growth. Central regulator of appressorium development that acts downstream of the cAMP signal. The MST11-MST7-PMK1 MAP kinase cascade transduces signals from the cell surface sensors MDB2 and SHO1 that recognize various surface signals such as surface hydrophobicity, cutin monomers, and rice leaf waxes. Regulates expression of secreted fungal effector proteins implicated of host immune defenses, preventing reactive oxygen species generation and excessive callose deposition at plasmodesmata. Furthermore, controls the hyphal constriction required for fungal growth from one rice cell to the neighboring cell, enabling host tissue colonization and blast disease. Targets downstream of the PMK1-MAPK pathway include transcription factor MST12 and pathogenicity-related genes GAS1 and GAS2, both of which are expressed during appressorium formation, even if regulation of MST12 is not associated with expression of GAS1 or GAS2. The polypeptide is Mitogen-activated protein kinase PMK11 (Pyricularia oryzae (strain 70-15 / ATCC MYA-4617 / FGSC 8958) (Rice blast fungus)).